The chain runs to 524 residues: Ribose import ATP-binding protein RbsA (524 aa).

ABC transporter domains lie at 17-252 (LQLD…GRSI) and 263-505 (IGQP…VSQV). Residue 49–56 (GENGAGKS) coordinates ATP.

Belongs to the ABC transporter superfamily. Ribose importer (TC 3.A.1.2.1) family. In terms of assembly, the complex is composed of an ATP-binding protein (RbsA), two transmembrane proteins (RbsC) and a solute-binding protein (RbsB).

It is found in the cell membrane. The enzyme catalyses D-ribose(out) + ATP + H2O = D-ribose(in) + ADP + phosphate + H(+). In terms of biological role, part of the ABC transporter complex RbsABC involved in ribose import. Responsible for energy coupling to the transport system. The protein is Ribose import ATP-binding protein RbsA of Corynebacterium glutamicum (strain ATCC 13032 / DSM 20300 / JCM 1318 / BCRC 11384 / CCUG 27702 / LMG 3730 / NBRC 12168 / NCIMB 10025 / NRRL B-2784 / 534).